Reading from the N-terminus, the 83-residue chain is Delta-conotoxin-like Ac6.1 (83 aa).

Residues M1–A22 form the signal peptide. A propeptide spanning residues D23–R51 is cleaved from the precursor. Cystine bridges form between C54-C69, C61-C73, and C68-C78. Residues P57 and P65 each carry the 4-hydroxyproline modification.

This sequence belongs to the conotoxin O1 superfamily. Expressed by the venom duct.

It is found in the secreted. Delta-conotoxins bind to site 6 of voltage-gated sodium channels (Nav) and inhibit the inactivation process. This Conus achatinus (Little frog cone) protein is Delta-conotoxin-like Ac6.1.